We begin with the raw amino-acid sequence, 341 residues long: Tubulin beta chain (341 aa).

Residues serine 64, glycine 68, threonine 69, glycine 70, asparagine 130, and asparagine 152 each contribute to the GTP site.

This sequence belongs to the tubulin family. As to quaternary structure, dimer of alpha and beta chains. A typical microtubule is a hollow water-filled tube with an outer diameter of 25 nm and an inner diameter of 15 nM. Alpha-beta heterodimers associate head-to-tail to form protofilaments running lengthwise along the microtubule wall with the beta-tubulin subunit facing the microtubule plus end conferring a structural polarity. Microtubules usually have 13 protofilaments but different protofilament numbers can be found in some organisms and specialized cells. Mg(2+) is required as a cofactor.

It is found in the cytoplasm. Its subcellular location is the cytoskeleton. Tubulin is the major constituent of microtubules, a cylinder consisting of laterally associated linear protofilaments composed of alpha- and beta-tubulin heterodimers. Microtubules grow by the addition of GTP-tubulin dimers to the microtubule end, where a stabilizing cap forms. Below the cap, tubulin dimers are in GDP-bound state, owing to GTPase activity of alpha-tubulin. The sequence is that of Tubulin beta chain from Haliotis discus (Abalone).